The chain runs to 408 residues: Histone acetyltransferase type B subunit 2 (408 aa).

WD repeat units lie at residues 120–160, 167–207, 213–253, 255–295, and 299–339; these read KHEQ…KDHG, YHKE…NKSP, VHTD…AIQK, SVSS…KPLH, and GHED…AEQQ. The segment at 341 to 345 is interaction with the histone H4 N-terminus; that stretch reads DDAYD. Residues 356 to 396 form a WD 6 repeat; the sequence is GHRSPVNEFSHNSNVPWLMCSVEEENVLQIWKPANKIVRPP.

This sequence belongs to the WD repeat RBAP46/RBAP48/MSI1 family. Component of the HAT-B complex composed of at least HAT1 and HAT2. The HAT-B complex binds to histone H4 tail.

Its subcellular location is the cytoplasm. The protein resides in the nucleus. In terms of biological role, regulatory subunit of the histone acetylase B (HAT-B) complex. The complex acetylates 'Lys-12' of histone H4 which is required for telomeric silencing. This Kluyveromyces lactis (strain ATCC 8585 / CBS 2359 / DSM 70799 / NBRC 1267 / NRRL Y-1140 / WM37) (Yeast) protein is Histone acetyltransferase type B subunit 2 (HAT2).